Consider the following 262-residue polypeptide: Cytochrome c oxidase subunit 3 (262 aa).

7 helical membrane-spanning segments follow: residues 16-36 (PWPL…VQWF), 42-59 (TLFL…YQWW), 83-103 (GMIL…WAFF), 128-148 (FQIP…VTWA), 163-183 (SLFF…YEYI), 198-218 (FFVA…FLLI), and 240-260 (AWYW…IYWW).

Belongs to the cytochrome c oxidase subunit 3 family. As to quaternary structure, component of the cytochrome c oxidase (complex IV, CIV), a multisubunit enzyme composed of a catalytic core of 3 subunits and several supernumerary subunits. The complex exists as a monomer or a dimer and forms supercomplexes (SCs) in the inner mitochondrial membrane with ubiquinol-cytochrome c oxidoreductase (cytochrome b-c1 complex, complex III, CIII).

The protein localises to the mitochondrion inner membrane. The enzyme catalyses 4 Fe(II)-[cytochrome c] + O2 + 8 H(+)(in) = 4 Fe(III)-[cytochrome c] + 2 H2O + 4 H(+)(out). Its function is as follows. Component of the cytochrome c oxidase, the last enzyme in the mitochondrial electron transport chain which drives oxidative phosphorylation. The respiratory chain contains 3 multisubunit complexes succinate dehydrogenase (complex II, CII), ubiquinol-cytochrome c oxidoreductase (cytochrome b-c1 complex, complex III, CIII) and cytochrome c oxidase (complex IV, CIV), that cooperate to transfer electrons derived from NADH and succinate to molecular oxygen, creating an electrochemical gradient over the inner membrane that drives transmembrane transport and the ATP synthase. Cytochrome c oxidase is the component of the respiratory chain that catalyzes the reduction of oxygen to water. Electrons originating from reduced cytochrome c in the intermembrane space (IMS) are transferred via the dinuclear copper A center (CU(A)) of subunit 2 and heme A of subunit 1 to the active site in subunit 1, a binuclear center (BNC) formed by heme A3 and copper B (CU(B)). The BNC reduces molecular oxygen to 2 water molecules using 4 electrons from cytochrome c in the IMS and 4 protons from the mitochondrial matrix. The polypeptide is Cytochrome c oxidase subunit 3 (Aedes aegypti (Yellowfever mosquito)).